Consider the following 208-residue polypeptide: Protein-L-isoaspartate O-methyltransferase (208 aa).

S59 is an active-site residue.

This sequence belongs to the methyltransferase superfamily. L-isoaspartyl/D-aspartyl protein methyltransferase family.

The protein resides in the cytoplasm. It carries out the reaction [protein]-L-isoaspartate + S-adenosyl-L-methionine = [protein]-L-isoaspartate alpha-methyl ester + S-adenosyl-L-homocysteine. Catalyzes the methyl esterification of L-isoaspartyl residues in peptides and proteins that result from spontaneous decomposition of normal L-aspartyl and L-asparaginyl residues. It plays a role in the repair and/or degradation of damaged proteins. This is Protein-L-isoaspartate O-methyltransferase from Vibrio atlanticus (strain LGP32) (Vibrio splendidus (strain Mel32)).